Consider the following 500-residue polypeptide: Probable cytosol aminopeptidase (500 aa).

Mn(2+) contacts are provided by Lys-262 and Asp-267. Lys-274 is a catalytic residue. Positions 285, 344, and 346 each coordinate Mn(2+). Arg-348 is an active-site residue.

The protein belongs to the peptidase M17 family. Requires Mn(2+) as cofactor.

The protein resides in the cytoplasm. It catalyses the reaction Release of an N-terminal amino acid, Xaa-|-Yaa-, in which Xaa is preferably Leu, but may be other amino acids including Pro although not Arg or Lys, and Yaa may be Pro. Amino acid amides and methyl esters are also readily hydrolyzed, but rates on arylamides are exceedingly low.. It carries out the reaction Release of an N-terminal amino acid, preferentially leucine, but not glutamic or aspartic acids.. Functionally, presumably involved in the processing and regular turnover of intracellular proteins. Catalyzes the removal of unsubstituted N-terminal amino acids from various peptides. This Ehrlichia ruminantium (strain Welgevonden) protein is Probable cytosol aminopeptidase.